The chain runs to 159 residues: Transcription elongation factor GreA (159 aa).

The stretch at 2–77 (EENKEFLLTQ…LENMVRKAVI (76 aa)) forms a coiled coil.

The protein belongs to the GreA/GreB family.

Necessary for efficient RNA polymerase transcription elongation past template-encoded arresting sites. The arresting sites in DNA have the property of trapping a certain fraction of elongating RNA polymerases that pass through, resulting in locked ternary complexes. Cleavage of the nascent transcript by cleavage factors such as GreA or GreB allows the resumption of elongation from the new 3'terminus. GreA releases sequences of 2 to 3 nucleotides. The chain is Transcription elongation factor GreA from Clostridioides difficile (strain 630) (Peptoclostridium difficile).